Consider the following 173-residue polypeptide: Crossover junction endodeoxyribonuclease RuvC (173 aa).

Catalysis depends on residues Asp-8, Glu-67, and Asp-139. Asp-8, Glu-67, and Asp-139 together coordinate Mg(2+).

It belongs to the RuvC family. Homodimer which binds Holliday junction (HJ) DNA. The HJ becomes 2-fold symmetrical on binding to RuvC with unstacked arms; it has a different conformation from HJ DNA in complex with RuvA. In the full resolvosome a probable DNA-RuvA(4)-RuvB(12)-RuvC(2) complex forms which resolves the HJ. Mg(2+) is required as a cofactor.

The protein resides in the cytoplasm. It catalyses the reaction Endonucleolytic cleavage at a junction such as a reciprocal single-stranded crossover between two homologous DNA duplexes (Holliday junction).. In terms of biological role, the RuvA-RuvB-RuvC complex processes Holliday junction (HJ) DNA during genetic recombination and DNA repair. Endonuclease that resolves HJ intermediates. Cleaves cruciform DNA by making single-stranded nicks across the HJ at symmetrical positions within the homologous arms, yielding a 5'-phosphate and a 3'-hydroxyl group; requires a central core of homology in the junction. The consensus cleavage sequence is 5'-(A/T)TT(C/G)-3'. Cleavage occurs on the 3'-side of the TT dinucleotide at the point of strand exchange. HJ branch migration catalyzed by RuvA-RuvB allows RuvC to scan DNA until it finds its consensus sequence, where it cleaves and resolves the cruciform DNA. The polypeptide is Crossover junction endodeoxyribonuclease RuvC (Shewanella frigidimarina (strain NCIMB 400)).